Reading from the N-terminus, the 845-residue chain is Alanine--tRNA ligase (845 aa).

His552, His556, Cys653, and His657 together coordinate Zn(2+).

This sequence belongs to the class-II aminoacyl-tRNA synthetase family. The cofactor is Zn(2+).

The protein resides in the cytoplasm. The catalysed reaction is tRNA(Ala) + L-alanine + ATP = L-alanyl-tRNA(Ala) + AMP + diphosphate. Its function is as follows. Catalyzes the attachment of alanine to tRNA(Ala) in a two-step reaction: alanine is first activated by ATP to form Ala-AMP and then transferred to the acceptor end of tRNA(Ala). Also edits incorrectly charged Ser-tRNA(Ala) and Gly-tRNA(Ala) via its editing domain. In Campylobacter hominis (strain ATCC BAA-381 / DSM 21671 / CCUG 45161 / LMG 19568 / NCTC 13146 / CH001A), this protein is Alanine--tRNA ligase.